Consider the following 171-residue polypeptide: Protein phosphatase 1 regulatory subunit 1A (171 aa).

Methionine 1 is subject to N-acetylmethionine. The interval 1–171 is disordered; that stretch reads MEPDNSPRKI…PLDSQGASLV (171 aa). An essential for activity region spans residues 9–12; sequence KIQF. Residues 19–29 are compositionally biased toward basic and acidic residues; sequence PHLDPEAAEQI. Threonine 35 bears the Phosphothreonine mark. Positions 42-54 are essential for activity; it reads TSDQSSPEIDEDR. A phosphoserine mark is found at serine 43, serine 46, serine 47, and serine 67. Over residues 122 to 146 the composition is skewed to polar residues; it reads GSASRPDTPGTAQKSAESNPKTQEQ. An interaction with PPP1R15A region spans residues 143-171; the sequence is TQEQCGVEPRTEDSSAHMLPLDSQGASLV.

Belongs to the protein phosphatase inhibitor 1 family. Interacts with PPP1R15A. In terms of processing, phosphorylation of Thr-35 is required for activity.

Its function is as follows. Inhibitor of protein-phosphatase 1. This protein may be important in hormonal control of glycogen metabolism. Hormones that elevate intracellular cAMP increase I-1 activity in many tissues. I-1 activation may impose cAMP control over proteins that are not directly phosphorylated by PKA. Following a rise in intracellular calcium, I-1 is inactivated by calcineurin (or PP2B). Does not inhibit type-2 phosphatases. This chain is Protein phosphatase 1 regulatory subunit 1A (Ppp1r1a), found in Mus musculus (Mouse).